A 192-amino-acid chain; its full sequence is UPF0312 protein YE1254 (192 aa).

The signal sequence occupies residues Met1–Ala23.

It belongs to the UPF0312 family. Type 1 subfamily.

The protein resides in the periplasm. The chain is UPF0312 protein YE1254 from Yersinia enterocolitica serotype O:8 / biotype 1B (strain NCTC 13174 / 8081).